We begin with the raw amino-acid sequence, 604 residues long: Glutamine--fructose-6-phosphate aminotransferase [isomerizing] (604 aa).

Cys-2 functions as the Nucleophile; for GATase activity in the catalytic mechanism. The Glutamine amidotransferase type-2 domain maps to 2 to 216 (CGIVGYVGFR…DGDVVRLTRE (215 aa)). 2 consecutive SIS domains span residues 281 to 420 (LALD…ARGA) and 453 to 594 (VAEK…VDQP). Residue Lys-599 is the For Fru-6P isomerization activity of the active site.

In terms of assembly, homodimer.

It is found in the cytoplasm. The catalysed reaction is D-fructose 6-phosphate + L-glutamine = D-glucosamine 6-phosphate + L-glutamate. Functionally, catalyzes the first step in hexosamine metabolism, converting fructose-6P into glucosamine-6P using glutamine as a nitrogen source. The polypeptide is Glutamine--fructose-6-phosphate aminotransferase [isomerizing] (Thermus thermophilus (strain ATCC BAA-163 / DSM 7039 / HB27)).